Reading from the N-terminus, the 235-residue chain is tRNA (cytidine-2'-O-)-methyltransferase TrmJ (235 aa).

Residues 77-79, Gly111, Ile131, and 138-140 contribute to the S-adenosyl-L-methionine site; these read TSS and PVL.

This sequence belongs to the class IV-like SAM-binding methyltransferase superfamily. RNA methyltransferase TrmH family. In terms of assembly, homodimer.

It localises to the cytoplasm. It catalyses the reaction cytidine(32) in tRNA + S-adenosyl-L-methionine = 2'-O-methylcytidine(32) in tRNA + S-adenosyl-L-homocysteine + H(+). Its function is as follows. Catalyzes the formation of 2'O-methylated cytidine (Cm32) at position 32 in tRNA. Is specific for cytidine. In Sulfolobus acidocaldarius (strain ATCC 33909 / DSM 639 / JCM 8929 / NBRC 15157 / NCIMB 11770), this protein is tRNA (cytidine-2'-O-)-methyltransferase TrmJ.